The sequence spans 672 residues: Glycine--tRNA ligase beta subunit (672 aa).

It belongs to the class-II aminoacyl-tRNA synthetase family. As to quaternary structure, tetramer of two alpha and two beta subunits.

It is found in the cytoplasm. The enzyme catalyses tRNA(Gly) + glycine + ATP = glycyl-tRNA(Gly) + AMP + diphosphate. The protein is Glycine--tRNA ligase beta subunit of Thermotoga petrophila (strain ATCC BAA-488 / DSM 13995 / JCM 10881 / RKU-1).